Here is a 318-residue protein sequence, read N- to C-terminus: 2,4-dinitroanisole O-demethylase subunit beta (318 aa).

It belongs to the metallo-beta-lactamase superfamily. Part of the complex DnhAB composed of the 2,4-dinitroanisole O-demethylase alpha (DnhA) and beta (DnhB) subunits.

It catalyses the reaction 2,4-dinitroanisole + H2O = 2,4-dinitrophenol + methanol + H(+). Involved in the degradation of 2,4-dinitroanisole (DNAN), an insensitive munition ingredient used in explosive formulations as a replacement for 2,4,6-trinitrotoluene (TNT). Catalyzes the removal of the methyl group from 2,4-dinitroanisole (DNAN) to yield 2,4-dinitrophenol (2,4-DNP) and methanol. This is 2,4-dinitroanisole O-demethylase subunit beta from Nocardioides sp. (strain JS1661).